The sequence spans 385 residues: MHNWLLPEHIADILPATARQLESAKAAMLERFRRYGYELVSPPLIEYTDSLLTNADPALDMQTFKLDDQLSGRQLGLRADMTPQVARIDAHLLAHRQGVTRLCYAGSVVHTRASGLMRSREPLQVGAELYGCYDLAADIEIIELMLSTLAGVGIDAVTLDLGHLGVYRALVREAQLDGETEQALFAALQAKDRASVEALTADVREPFCSAFRHLVDLYGPEAIGKARARLPGLPGIRAALDDLERLAQIFASRARISFDLTELRGTHYHTGLMFAAYAEGWAEELARGGRYDNVGRRFGRARPATGFSLDLRDMIRVLPQTHPSKGIRVRAADLSRLADEVARLRAAGEVVVVDYLGETAADLHCDRELVCREEGQSLEAAPAHP.

This sequence belongs to the class-II aminoacyl-tRNA synthetase family. HisZ subfamily. Heteromultimer composed of HisG and HisZ subunits.

It is found in the cytoplasm. It participates in amino-acid biosynthesis; L-histidine biosynthesis; L-histidine from 5-phospho-alpha-D-ribose 1-diphosphate: step 1/9. In terms of biological role, required for the first step of histidine biosynthesis. May allow the feedback regulation of ATP phosphoribosyltransferase activity by histidine. This chain is ATP phosphoribosyltransferase regulatory subunit, found in Laribacter hongkongensis (strain HLHK9).